Consider the following 1198-residue polypeptide: Structural polyprotein (1198 aa).

The interaction with host EXOC1 stretch occupies residues 2–15 (TKKPGGPGKNRAIN). A hydrophobic; homodimerization of capsid protein C region spans residues 37–72 (LLDGRGPVRFVLALITFFKFTALAPTKALLGRWRAV). Residues 106 to 127 (GGNESSIMWLASLAIVIACAGA) constitute a propeptide, ER anchor for the capsid protein C, removed in mature form by serine protease NS3. Residues 110–130 (SSIMWLASLAIVIACAGAMKL) traverse the membrane as a helical segment. The N-linked (GlcNAc...) asparagine; by host glycan is linked to Asn142. The next 2 membrane-spanning stretches (helical) occupy residues 254 to 274 (WIIR…MLGS) and 280 to 294 (VVFT…PAYS). 6 cysteine pairs are disulfide-bonded: Cys297–Cys324, Cys354–Cys410, Cys354–Cys415, Cys368–Cys399, Cys386–Cys410, and Cys386–Cys415. Positions 392–405 (DRGWGNGCGLFGKG) are fusion peptide. The N-linked (GlcNAc...) asparagine; by host glycan is linked to Asn448. Intrachain disulfides connect Cys484/Cys581 and Cys598/Cys629. Helical transmembrane passes span 747–767 (FGGM…WMGV) and 774–794 (IALA…NVHA). Disulfide bonds link Cys798-Cys809, Cys849-Cys937, Cys973-Cys1017, Cys1074-Cys1123, Cys1085-Cys1106, and Cys1107-Cys1110. Asn924 and Asn1001 each carry an N-linked (GlcNAc...) asparagine; by host glycan. The segment at 1151-1178 (MIDPFSAGPSGDVSGHPGGPSQEVDGQI) is disordered.

As to quaternary structure, homodimer. Interacts (via N-terminus) with host EXOC1 (via C-terminus); this interaction results in EXOC1 degradation through the proteasome degradation pathway. Interacts with host CAPRIN1; this interaction is involved in the suppression of the integrated stress response. Forms heterodimers with envelope protein E in the endoplasmic reticulum and Golgi. In terms of assembly, homodimer; in the endoplasmic reticulum and Golgi. Interacts with protein prM. Interacts with non-structural protein 1. In terms of processing, genome polyprotein: Specific enzymatic cleavages in vivo yield mature proteins. Cleavages in the lumen of endoplasmic reticulum are performed by host signal peptidase, whereas cleavages in the cytoplasmic side are performed by serine protease NS3. Signal cleavage at the 2K-4B site requires a prior NS3 protease-mediated cleavage at the 4A-2K site. Cleaved in post-Golgi vesicles by a host furin, releasing the mature small envelope protein M, and peptide pr. This cleavage is incomplete as up to 30% of viral particles still carry uncleaved prM. Post-translationally, N-glycosylated.

The protein localises to the secreted. It is found in the virion membrane. It localises to the host endoplasmic reticulum membrane. In terms of biological role, plays a role in virus budding by binding to the cell membrane and gathering the viral RNA into a nucleocapsid that forms the core of a mature virus particle. During virus entry, may induce genome penetration into the host cytoplasm after hemifusion induced by the surface proteins. Can migrate to the cell nucleus where it modulates host functions. Overcomes the anti-viral effects of host EXOC1 by sequestering and degrading the latter through the proteasome degradation pathway. Inhibits the integrated stress response (ISR) in the infected cell by binding to host CAPRIN1. Functionally, inhibits RNA silencing by interfering with host Dicer. Its function is as follows. Prevents premature fusion activity of envelope proteins in trans-Golgi by binding to envelope protein E at pH6.0. After virion release in extracellular space, gets dissociated from E dimers. Acts as a chaperone for envelope protein E during intracellular virion assembly by masking and inactivating envelope protein E fusion peptide. prM is the only viral peptide matured by host furin in the trans-Golgi network probably to avoid catastrophic activation of the viral fusion activity in acidic Golgi compartment prior to virion release. prM-E cleavage is inefficient, and many virions are only partially matured. These uncleaved prM would play a role in immune evasion. In terms of biological role, may play a role in virus budding. Exerts cytotoxic effects by activating a mitochondrial apoptotic pathway through M ectodomain. May display a viroporin activity. Functionally, binds to host cell surface receptor and mediates fusion between viral and cellular membranes. Envelope protein is synthesized in the endoplasmic reticulum in the form of heterodimer with protein prM. They play a role in virion budding in the ER, and the newly formed immature particle is covered with 60 spikes composed of heterodimer between precursor prM and envelope protein E. The virion is transported to the Golgi apparatus where the low pH causes dissociation of PrM-E heterodimers and formation of E homodimers. prM-E cleavage is inefficient, and many virions are only partially matured. These uncleaved prM would play a role in immune evasion. In Ardeidae (herons), this protein is Structural polyprotein.